Here is a 490-residue protein sequence, read N- to C-terminus: ATP-dependent 6-phosphofructokinase (490 aa).

Residues Gly109, 175-176 (RG), and 200-203 (GDGT) each bind ATP. Asp201 is a Mg(2+) binding site. Residues 229 to 231 (TID), 274 to 276 (MGR), Glu327, and 383 to 386 (YMIR) contribute to the substrate site. Asp231 functions as the Proton acceptor in the catalytic mechanism. Residues 488-490 (SKL) carry the Peroxisomal targeting signal motif.

Belongs to the phosphofructokinase type A (PFKA) family. PPi-dependent PFK group II subfamily. Atypical ATP-dependent clade 'X' sub-subfamily. Homotetramer. The cofactor is Mg(2+).

The protein resides in the glycosome. It catalyses the reaction beta-D-fructose 6-phosphate + ATP = beta-D-fructose 1,6-bisphosphate + ADP + H(+). Its pathway is carbohydrate degradation; glycolysis; D-glyceraldehyde 3-phosphate and glycerone phosphate from D-glucose: step 3/4. Allosterically activated by AMP. Catalyzes the phosphorylation of D-fructose 6-phosphate to fructose 1,6-bisphosphate by ATP, the first committing step of glycolysis. The polypeptide is ATP-dependent 6-phosphofructokinase (Trypanoplasma borreli).